Here is a 234-residue protein sequence, read N- to C-terminus: MMRSRFLLFIVFFSLSLFISSLIASDLGFCNEEMALVGGVGDVPANQNSGEVESLARFAVDEHNKKENALLEFARVVKAKEQVVAGTLHHLTLEILEAGQKKLYEAKVWVKPWLNFKELQEFKPASDAPAITSSDLGCKQGEHESGWREVPGDDPEVKHVAEQAVKTIQQRSNSLFPYELLEVVHAKAEVTGEAAKYNMLLKLKRGEKEEKFKVEVHKNHEGALHLNHAEQHHD.

Positions 1–24 (MMRSRFLLFIVFFSLSLFISSLIA) are cleaved as a signal peptide. At Met2 the chain carries N-acetylalanine. 2 Cystatin domains span residues 38–126 (GGVG…KPAS) and 145–215 (SGWR…FKVE). The Secondary area of contact motif lies at 82-86 (QVVAG). Residues 133-154 (SSDLGCKQGEHESGWREVPGDD) form a disordered region. The span at 140 to 154 (QGEHESGWREVPGDD) shows a compositional bias: basic and acidic residues. Position 174 is a phosphoserine (Ser174).

Belongs to the cystatin family. Phytocystatin subfamily.

The protein localises to the secreted. Functionally, specific inhibitor of cysteine proteinases. Probably involved in the regulation of endogenous processes and in defense against pests and pathogens. This Arabidopsis thaliana (Mouse-ear cress) protein is Cysteine proteinase inhibitor 6 (CYS6).